A 384-amino-acid polypeptide reads, in one-letter code: Cytochrome b (384 aa).

4 helical membrane passes run 33-53 (YGSL…FLAM), 77-98 (WLIR…YLHI), 113-133 (WNVG…GYVL), and 178-198 (FFAF…IHLL). 2 residues coordinate heme b: histidine 83 and histidine 97. The heme b site is built by histidine 182 and histidine 196. Residue histidine 201 coordinates a ubiquinone. A run of 4 helical transmembrane segments spans residues 226–246 (YKDL…ALFT), 288–308 (LGGV…PILH), 320–340 (LSQM…WIGG), and 347–367 (FIII…VLMP).

This sequence belongs to the cytochrome b family. In terms of assembly, the cytochrome bc1 complex contains 3 respiratory subunits (MT-CYB, CYC1 and UQCRFS1), 2 core proteins (UQCRC1 and UQCRC2) and probably 6 low-molecular weight proteins. The cofactor is heme b.

The protein resides in the mitochondrion inner membrane. Functionally, component of the ubiquinol-cytochrome c reductase complex (complex III or cytochrome b-c1 complex) that is part of the mitochondrial respiratory chain. The b-c1 complex mediates electron transfer from ubiquinol to cytochrome c. Contributes to the generation of a proton gradient across the mitochondrial membrane that is then used for ATP synthesis. The chain is Cytochrome b (mt-cyb) from Anoplogaster cornuta (Common fangtooth).